Reading from the N-terminus, the 474-residue chain is tRNA-2-methylthio-N(6)-dimethylallyladenosine synthase (474 aa).

The MTTase N-terminal domain occupies 3 to 120 (KKLHIKTWGC…LPEMINSVRG (118 aa)). The [4Fe-4S] cluster site is built by cysteine 12, cysteine 49, cysteine 83, cysteine 157, cysteine 161, and cysteine 164. A Radical SAM core domain is found at 143–375 (RAEGPTAFVS…QERINQQAMA (233 aa)). The TRAM domain maps to 378 to 441 (RRMLGTTQRI…PNSLRGKVVR (64 aa)).

Belongs to the methylthiotransferase family. MiaB subfamily. Monomer. [4Fe-4S] cluster serves as cofactor.

It is found in the cytoplasm. It catalyses the reaction N(6)-dimethylallyladenosine(37) in tRNA + (sulfur carrier)-SH + AH2 + 2 S-adenosyl-L-methionine = 2-methylsulfanyl-N(6)-dimethylallyladenosine(37) in tRNA + (sulfur carrier)-H + 5'-deoxyadenosine + L-methionine + A + S-adenosyl-L-homocysteine + 2 H(+). It carries out the reaction N(6)-dimethylallyladenosine(37) in tRNA + (sulfur carrier)-SH + AH2 + S-adenosyl-L-methionine = 2-thio-N(6)-dimethylallyladenosine(37) in tRNA + (sulfur carrier)-H + 5'-deoxyadenosine + L-methionine + A + H(+). The enzyme catalyses 2-thio-N(6)-dimethylallyladenosine(37) in tRNA + S-adenosyl-L-methionine = 2-methylsulfanyl-N(6)-dimethylallyladenosine(37) in tRNA + S-adenosyl-L-homocysteine + H(+). Functionally, catalyzes the methylthiolation of N6-(dimethylallyl)adenosine (i(6)A), leading to the formation of 2-methylthio-N6-(dimethylallyl)adenosine (ms(2)i(6)A) at position 37 in tRNAs that read codons beginning with uridine. In Salmonella typhimurium (strain LT2 / SGSC1412 / ATCC 700720), this protein is tRNA-2-methylthio-N(6)-dimethylallyladenosine synthase.